A 262-amino-acid chain; its full sequence is ATP synthase subunit a (262 aa).

7 helical membrane-spanning segments follow: residues 30 to 50, 64 to 84, 91 to 111, 123 to 143, 149 to 169, 195 to 215, and 220 to 240; these read ITSL…LTIF, WNIV…DQIG, LIYF…NILG, ISVT…IGFS, FFSL…LVLI, LFGV…SILL, and IGLP…VALL.

It belongs to the ATPase A chain family. As to quaternary structure, F-type ATPases have 2 components, CF(1) - the catalytic core - and CF(0) - the membrane proton channel. CF(1) has five subunits: alpha(3), beta(3), gamma(1), delta(1), epsilon(1). CF(0) has three main subunits: a, b and c.

The protein localises to the mitochondrion inner membrane. Mitochondrial membrane ATP synthase (F(1)F(0) ATP synthase or Complex V) produces ATP from ADP in the presence of a proton gradient across the membrane which is generated by electron transport complexes of the respiratory chain. F-type ATPases consist of two structural domains, F(1) - containing the extramembraneous catalytic core and F(0) - containing the membrane proton channel, linked together by a central stalk and a peripheral stalk. During catalysis, ATP synthesis in the catalytic domain of F(1) is coupled via a rotary mechanism of the central stalk subunits to proton translocation. Key component of the proton channel; it may play a direct role in the translocation of protons across the membrane. The sequence is that of ATP synthase subunit a (ATP6) from Allomyces arbusculus (Aquatic fungus).